Here is a 181-residue protein sequence, read N- to C-terminus: Oligoribonuclease (181 aa).

An Exonuclease domain is found at 8–171 (LIWIDLEMTG…DDIRESVGEL (164 aa)). The active site involves Y129.

This sequence belongs to the oligoribonuclease family.

It localises to the cytoplasm. Its function is as follows. 3'-to-5' exoribonuclease specific for small oligoribonucleotides. This chain is Oligoribonuclease, found in Serratia proteamaculans (strain 568).